Consider the following 426-residue polypeptide: Synaptotagmin-13 (426 aa).

The Vesicular segment spans residues 1-6; it reads MVLSVP. A helical membrane pass occupies residues 7-29; that stretch reads VIALGATLGTATSILALCGVTCL. Over 30-426 the chain is Cytoplasmic; the sequence is CRHMHPKKGL…QIAMWHQLHL (397 aa). C2 domains lie at 158–275 and 287–422; these read QAPK…AQWG and GTGE…AMWH.

The protein belongs to the synaptotagmin family. Interacts with NRXN1. As to expression, expressed in brain, spleen, kidney and testis.

The protein localises to the membrane. In terms of biological role, may be involved in transport vesicle docking to the plasma membrane. This Rattus norvegicus (Rat) protein is Synaptotagmin-13 (Syt13).